A 420-amino-acid chain; its full sequence is Glutamyl-tRNA reductase (420 aa).

Substrate contacts are provided by residues 49–52 (TCNR), Ser110, 115–117 (EHQ), and Gln121. The Nucleophile role is filled by Cys50. 190–195 (GSGTIN) contributes to the NADP(+) binding site.

The protein belongs to the glutamyl-tRNA reductase family. Homodimer.

It catalyses the reaction (S)-4-amino-5-oxopentanoate + tRNA(Glu) + NADP(+) = L-glutamyl-tRNA(Glu) + NADPH + H(+). It participates in porphyrin-containing compound metabolism; protoporphyrin-IX biosynthesis; 5-aminolevulinate from L-glutamyl-tRNA(Glu): step 1/2. Functionally, catalyzes the NADPH-dependent reduction of glutamyl-tRNA(Glu) to glutamate 1-semialdehyde (GSA). This Wigglesworthia glossinidia brevipalpis protein is Glutamyl-tRNA reductase.